A 249-amino-acid polypeptide reads, in one-letter code: Undecaprenyl-diphosphatase (249 aa).

A run of 8 helical transmembrane segments spans residues 11–31 (GLTE…TAIF), 35–55 (PDVG…LIFV), 80–100 (LVLS…FIES), 101–121 (VFSS…LMLL), 135–155 (IPYL…LPGI), 175–195 (AVKY…ILEL), 202–222 (AEQL…LYLV), and 226–246 (VIGG…FFVL).

Belongs to the UppP family.

The protein localises to the cell membrane. It catalyses the reaction di-trans,octa-cis-undecaprenyl diphosphate + H2O = di-trans,octa-cis-undecaprenyl phosphate + phosphate + H(+). In terms of biological role, catalyzes the dephosphorylation of undecaprenyl diphosphate (UPP). The polypeptide is Undecaprenyl-diphosphatase (Methanococcus maripaludis (strain C5 / ATCC BAA-1333)).